Consider the following 149-residue polypeptide: Calmodulin-2 (149 aa).

Ala-2 is subject to N-acetylalanine. 4 EF-hand domains span residues 8–43 (EQIA…LGQN), 44–79 (PTEA…KMKD), 81–116 (DSEE…LGEK), and 117–149 (LTDE…MLAK). Ca(2+) is bound by residues Asp-21, Asp-23, Asp-25, Cys-27, Glu-32, Asp-57, Asp-59, Asn-61, Thr-63, Glu-68, Asp-94, Asp-96, Asn-98, Tyr-100, and Asp-105. Lys-116 is modified (N6,N6,N6-trimethyllysine). Asp-130, Asp-132, Asp-134, Gln-136, and Glu-141 together coordinate Ca(2+).

Belongs to the calmodulin family.

Functionally, calmodulin mediates the control of a large number of enzymes, ion channels and other proteins by Ca(2+). Among the enzymes to be stimulated by the calmodulin-Ca(2+) complex are a number of protein kinases and phosphatases. In Petunia hybrida (Petunia), this protein is Calmodulin-2 (CAM72).